The following is a 74-amino-acid chain: Sec-independent protein translocase protein TatA (74 aa).

The chain crosses the membrane as a helical span at residues 1 to 21; it reads MGSIGMTELLLIFGIIVLLFG.

The protein belongs to the TatA/E family. Forms a complex with TatC.

The protein localises to the cell inner membrane. Part of the twin-arginine translocation (Tat) system that transports large folded proteins containing a characteristic twin-arginine motif in their signal peptide across membranes. TatA could form the protein-conducting channel of the Tat system. The chain is Sec-independent protein translocase protein TatA from Sulfurihydrogenibium sp. (strain YO3AOP1).